The sequence spans 778 residues: DNA topoisomerase 1 (778 aa).

The disordered stretch occupies residues 1 to 141; that stretch reads MNSSDEEDIA…ETPEEDQGYK (141 aa). The span at 17–26 shows a compositional bias: low complexity; sequence KSSSITSAST. 2 stretches are compositionally biased toward basic and acidic residues: residues 71-83 and 100-121; these read VKTE…EPKS and EKTT…ESKT. The span at 122-131 shows a compositional bias: polar residues; it reads QSDSQASVKS. 3 interaction with DNA regions span residues 367 to 368, 430 to 435, and 522 to 524; these read KY, RAGGEK, and TAK. One can recognise a Topo IB-type catalytic domain in the interval 374 to 778; the sequence is NSSVKGQSDF…IESADENWRF (405 aa). The O-(3'-phospho-DNA)-tyrosine intermediate role is filled by Tyr736.

This sequence belongs to the type IB topoisomerase family.

It carries out the reaction ATP-independent breakage of single-stranded DNA, followed by passage and rejoining.. Releases the supercoiling and torsional tension of DNA introduced during the DNA replication and transcription by transiently cleaving and rejoining one strand of the DNA duplex. Introduces a single-strand break via transesterification at a target site in duplex DNA. The scissile phosphodiester is attacked by the catalytic tyrosine of the enzyme, resulting in the formation of a DNA-(3'-phosphotyrosyl)-enzyme intermediate and the expulsion of a 5'-OH DNA strand. The free DNA strand then rotates around the intact phosphodiester bond on the opposing strand, thus removing DNA supercoils. Finally, in the religation step, the DNA 5'-OH attacks the covalent intermediate to expel the active-site tyrosine and restore the DNA phosphodiester backbone. This chain is DNA topoisomerase 1 (TOP1), found in Candida albicans (Yeast).